Here is a 556-residue protein sequence, read N- to C-terminus: 2-succinyl-5-enolpyruvyl-6-hydroxy-3-cyclohexene-1-carboxylate synthase (556 aa).

It belongs to the TPP enzyme family. MenD subfamily. In terms of assembly, homodimer. It depends on Mg(2+) as a cofactor. Requires Mn(2+) as cofactor. Thiamine diphosphate is required as a cofactor.

The enzyme catalyses isochorismate + 2-oxoglutarate + H(+) = 5-enolpyruvoyl-6-hydroxy-2-succinyl-cyclohex-3-ene-1-carboxylate + CO2. The protein operates within quinol/quinone metabolism; 1,4-dihydroxy-2-naphthoate biosynthesis; 1,4-dihydroxy-2-naphthoate from chorismate: step 2/7. Its pathway is quinol/quinone metabolism; menaquinone biosynthesis. Functionally, catalyzes the thiamine diphosphate-dependent decarboxylation of 2-oxoglutarate and the subsequent addition of the resulting succinic semialdehyde-thiamine pyrophosphate anion to isochorismate to yield 2-succinyl-5-enolpyruvyl-6-hydroxy-3-cyclohexene-1-carboxylate (SEPHCHC). In Escherichia coli O8 (strain IAI1), this protein is 2-succinyl-5-enolpyruvyl-6-hydroxy-3-cyclohexene-1-carboxylate synthase.